Here is a 667-residue protein sequence, read N- to C-terminus: Leucine-rich repeat-containing protein 43 (667 aa).

Residues 1-11 are compositionally biased toward polar residues; the sequence is METSESSTSDY. A disordered region spans residues 1 to 24; the sequence is METSESSTSDYRQTEGEGEGVPGT. 4 LRR repeats span residues 148-169, 170-191, 194-213, and 221-242; these read KLEELVLSANKIEEIDANNLPP, TLKVLELYGNLIASMECLCSAP, RLQHLGLGHNKLLGPLESLY, and QLVSLDLGFNNLTDLQNMILGL. Positions 256–294 constitute an LRRCT domain; sequence NPLSLVPYYRGFTIDSLAHLCVLDDITVSPNEKHQFRGL. Disordered regions lie at residues 374–407, 533–570, and 616–640; these read FSGTDEEDQQEDPLDGRHRHRGRQRFHPGSTEEM, ESPLPAKKGKDNNKKKEPAKDKVHKKKKEPPRELRQDP, and SKKVKKSLKKDRSKTVPPTMESGYQ. Over residues 377–386 the composition is skewed to acidic residues; the sequence is TDEEDQQEDP. Residues 390 to 399 are compositionally biased toward basic residues; the sequence is RHRHRGRQRF. The segment covering 540–553 has biased composition (basic and acidic residues); sequence KGKDNNKKKEPAKD. Positions 617-627 are enriched in basic residues; the sequence is KKVKKSLKKDR.

The chain is Leucine-rich repeat-containing protein 43 (Lrrc43) from Mus musculus (Mouse).